The following is a 434-amino-acid chain: Attachment protein G3P (434 aa).

An N-terminal signal peptide occupies residues 1–19 (MKRKIIAISLFLYIPLSNA). The segment at 20–130 (DNWESITKSY…IQRSVPDEEP (111 aa)) is N1. 3 disulfides stabilise this stretch: cysteine 63–cysteine 98, cysteine 139–cysteine 167, and cysteine 177–cysteine 184. Residues 89–107 (QFRLVTGDTCVYNGSPGEK) are G1 (Gly-rich linker). Residues 132-200 (EQTPEEICEA…PTGYVPESGE (69 aa)) are N2. The segment at 191 to 260 (PTGYVPESGE…GSSGGSTGKS (70 aa)) is disordered. The segment at 209–258 (GDTGGTGEGGSDTGGDTGGGDTGGGSTGGDTGGSSGGGSSGGGSSGGSTG) is gly-rich linker. Residues 211-257 (TGGTGEGGSDTGGDTGGGDTGGGSTGGDTGGSSGGGSSGGGSSGGST) are compositionally biased toward gly residues. CT stretches follow at residues 252–434 (SSGG…KGEQ) and 259–434 (KSLT…KGEQ). The chain crosses the membrane as a helical span at residues 408-429 (VLSWVMYCLTFWYVFQSVTSLL).

This sequence belongs to the inovirus G3P protein family. As to quaternary structure, interacts with G6P; this interaction is required for proper integration of G3P and G6P into the virion. Interacts with G8P. Interacts with the tip of the host pilus. Interacts (via N-terminus) with host TolA.

It localises to the virion. It is found in the host membrane. Plays essential roles both in the penetration of the viral genome into the bacterial host via pilus retraction and in the extrusion process. During the initial step of infection, G3P mediates adsorption of the phage to its primary receptor, the tip of host F-pilus. Attachment of the phage causes pilus retraction bringing the viral particle into close proximity of the host cell inner membrane. Subsequent interaction with the host entry receptors TolA (low affinity) and penetration of the viral DNA into the host cytoplasm. In the extrusion process, G3P mediates the release of the membrane-anchored virion from the cell via its C-terminal domain. The chain is Attachment protein G3P (III) from Escherichia coli (Bacteriophage IKe).